The chain runs to 565 residues: Bicyclogermacrene synthase (565 aa).

Residues Asp-317, Asp-321, Asp-461, and Glu-469 each coordinate Mg(2+). The DDXXD motif motif lies at Asp-317–Asp-321.

The protein belongs to the terpene synthase family. Requires Mg(2+) as cofactor.

It catalyses the reaction (2E,6E)-farnesyl diphosphate = bicyclogermacrene + diphosphate. It functions in the pathway secondary metabolite biosynthesis; terpenoid biosynthesis. Sesquiterpene synthase converting farnesyl diphosphate to bicyclogermacrene as the major product. The chain is Bicyclogermacrene synthase from Phyla dulcis (Aztec sweet herb).